The primary structure comprises 108 residues: Replication restart protein PriB (108 aa).

The SSB domain occupies 8–108 (IDNRFSVMGV…LHAEQIEFID (101 aa)).

Belongs to the PriB family. As to quaternary structure, homodimer. Interacts with PriA and DnaT. Component of the replication restart primosome. Primosome assembly occurs via a 'hand-off' mechanism. PriA binds to replication forks, subsequently PriB then DnaT bind; DnaT then displaces ssDNA to generate the helicase loading substrate.

Involved in the restart of stalled replication forks, which reloads the replicative helicase on sites other than the origin of replication; the PriA-PriB pathway is the major replication restart pathway. During primosome assembly it facilitates complex formation between PriA and DnaT on DNA; stabilizes PriA on DNA. Stimulates the DNA unwinding activity of PriA helicase. The chain is Replication restart protein PriB from Haemophilus influenzae (strain 86-028NP).